The chain runs to 287 residues: 4-hydroxybenzoate octaprenyltransferase (287 aa).

Transmembrane regions (helical) follow at residues 41-61 (WPLL…GCAM), 89-109 (WEAV…ILPL), 133-153 (FFAI…PMAF), 158-178 (DTVP…SVAY), 202-224 (FGRF…YVWI), and 266-286 (HNNW…LLAG).

Belongs to the UbiA prenyltransferase family. Mg(2+) serves as cofactor.

Its subcellular location is the cell inner membrane. The catalysed reaction is all-trans-octaprenyl diphosphate + 4-hydroxybenzoate = 4-hydroxy-3-(all-trans-octaprenyl)benzoate + diphosphate. It participates in cofactor biosynthesis; ubiquinone biosynthesis. In terms of biological role, catalyzes the prenylation of para-hydroxybenzoate (PHB) with an all-trans polyprenyl group. Mediates the second step in the final reaction sequence of ubiquinone-8 (UQ-8) biosynthesis, which is the condensation of the polyisoprenoid side chain with PHB, generating the first membrane-bound Q intermediate 3-octaprenyl-4-hydroxybenzoate. This chain is 4-hydroxybenzoate octaprenyltransferase, found in Burkholderia orbicola (strain MC0-3).